We begin with the raw amino-acid sequence, 141 residues long: Nucleoside triphosphatase NudI (141 aa).

Residues Met-1–Leu-141 form the Nudix hydrolase domain. Positions Gly-38–Gly-59 match the Nudix box motif.

This sequence belongs to the Nudix hydrolase family. NudI subfamily. As to quaternary structure, monomer. Mg(2+) is required as a cofactor.

The catalysed reaction is a ribonucleoside 5'-triphosphate + H2O = a ribonucleoside 5'-phosphate + diphosphate + H(+). It catalyses the reaction a 2'-deoxyribonucleoside 5'-triphosphate + H2O = a 2'-deoxyribonucleoside 5'-phosphate + diphosphate + H(+). The enzyme catalyses dUTP + H2O = dUMP + diphosphate + H(+). It carries out the reaction dTTP + H2O = dTMP + diphosphate + H(+). The catalysed reaction is dCTP + H2O = dCMP + diphosphate + H(+). Functionally, catalyzes the hydrolysis of nucleoside triphosphates, with a preference for pyrimidine deoxynucleoside triphosphates (dUTP, dTTP and dCTP). The sequence is that of Nucleoside triphosphatase NudI from Escherichia coli (strain ATCC 8739 / DSM 1576 / NBRC 3972 / NCIMB 8545 / WDCM 00012 / Crooks).